Here is a 122-residue protein sequence, read N- to C-terminus: Large ribosomal subunit protein uL14c (122 aa).

Belongs to the universal ribosomal protein uL14 family. As to quaternary structure, part of the 50S ribosomal subunit.

The protein localises to the plastid. The protein resides in the chloroplast. In terms of biological role, binds to 23S rRNA. This Nicotiana sylvestris (Wood tobacco) protein is Large ribosomal subunit protein uL14c.